A 299-amino-acid chain; its full sequence is Taste receptor type 2 member 16 (299 aa).

Residues Met1 to Gln5 are Extracellular-facing. Residues Val6–Cys26 form a helical membrane-spanning segment. Topologically, residues Thr27 to Pro44 are cytoplasmic. Residues Val45–Leu65 traverse the membrane as a helical segment. The Extracellular segment spans residues Tyr66–Ser82. A helical membrane pass occupies residues Val83–Tyr103. The Cytoplasmic portion of the chain corresponds to Cys104 to Leu125. The helical transmembrane segment at Val126–Val146 threads the bilayer. The Extracellular portion of the chain corresponds to Lys147 to Met183. Asn163 carries an N-linked (GlcNAc...) asparagine glycan. Residues Ile184 to Leu204 traverse the membrane as a helical segment. The Cytoplasmic portion of the chain corresponds to Val205–Thr233. The chain crosses the membrane as a helical span at residues Phe234–Phe254. Residues Asp255 to Ser258 are Extracellular-facing. The helical transmembrane segment at Trp259–Met279 threads the bilayer. Over Met280–Ser299 the chain is Cytoplasmic.

This sequence belongs to the G-protein coupled receptor T2R family. Interacts with RTP3 and RTP4. In terms of tissue distribution, expressed in subsets of taste receptor cells of the tongue and palate epithelium and exclusively in gustducin-positive cells. Expressed in the antrum and fundus (part of the stomach), duodenum and in gastric endocrine cells.

The protein resides in the cell membrane. Functionally, gustducin-coupled receptor implicated in the perception of bitter compounds in the oral cavity and the gastrointestinal tract. Signals through PLCB2 and the calcium-regulated cation channel TRPM5. The sequence is that of Taste receptor type 2 member 16 (Tas2r16) from Rattus norvegicus (Rat).